Reading from the N-terminus, the 58-residue chain is Conotoxin TxXIIIA (58 aa).

Positions 1–22 are cleaved as a signal peptide; it reads MRCLPVFVILLLLIASVPSVDA. Residues 23–46 constitute a propeptide that is removed on maturation; it reads ELKAKDDMPQASFHDNAERDQQKK.

As to quaternary structure, homodimer; disulfide-linked. In terms of processing, 5 disulfide bonds are present in each homodimer: two intrachain disulfide bonds per subunit, and one interchain disulfide bond linking the two subunits. As to expression, expressed by the venom duct.

It is found in the secreted. This is Conotoxin TxXIIIA from Conus textile (Cloth-of-gold cone).